Consider the following 505-residue polypeptide: MASGRRAPRTGLLELRAGAGSGAGGERWQRVLLSLAEDVLTVSPADGDPGPEPGAPREQEPAQLNGAAEPGAGPPQLPEALLLQRRRVTVRKADAGGLGISIKGGRENKMPILISKIFKGLAADQTEALFVGDAILSVNGEDLSSATHDEAVQVLKKTGKEVVLEVKYMKDVSPYFKNSTGGTSVGWDSPPASPLQRQPSSPGPTPRNFSEAKHMSLKMAYVSKRCTPNDPEPRYLEICSADGQDTLFLRAKDEASARSWATAIQAQVNTLTPRVKDELQALLAATSTAGSQDIKQIGWLTEQLPSGGTAPTLALLTEKELLLYLSLPETREALSRPARTAPLIATRLVHSGPSKGSVPYDAELSFALRTGTRHGVDTHLFSVESPQELAAWTRQLVDGCHRAAEGVQEVSTACTWNGRPCSLSVHIDKGFTLWAAEPGAARAVLLRQPFEKLQMSSDDGASLLFLDFGGAEGEIQLDLHSCPKTIVFIIHSFLSAKVTRLGLLA.

Disordered stretches follow at residues 1 to 25 (MASG…GAGG) and 40 to 77 (LTVS…PPQL). 2 consecutive PH domains span residues 6-269 (RAPR…AQVN) and 293-401 (DIKQ…DGCH). A PDZ domain is found at 87–170 (RVTVRKADAG…EVVLEVKYMK (84 aa)). Phosphoserine occurs at positions 101, 184, 189, 193, and 200. Positions 180-210 (TGGTSVGWDSPPASPLQRQPSSPGPTPRNFS) are disordered. The 57-residue stretch at 449–505 (PFEKLQMSSDDGASLLFLDFGGAEGEIQLDLHSCPKTIVFIIHSFLSAKVTRLGLLA) folds into the SU domain. The calmodulin-binding stretch occupies residues 483 to 505 (PKTIVFIIHSFLSAKVTRLGLLA).

The protein belongs to the syntrophin family. As to quaternary structure, monomer and homodimer. Interacts with the other members of the syntrophin family SNTB1 and SNTB2; SGCG and SGCA of the dystrophin glycoprotein complex; NOS1; GRB2; the sodium channel proteins SCN4A and SCN5A; F-actin and calmodulin. Interacts with dystrophin protein DMD and related proteins DTNA and UTRN and with MAPK12, TGFA and GA. Interacts with MYOC; regulates muscle hypertrophy. Interacts with DTNB. Phosphorylated by CaM-kinase II. Phosphorylation may inhibit the interaction with DMD. In terms of tissue distribution, high expression in skeletal muscle and heart. Low expression in brain, pancreas, liver, kidney and lung. Not detected in placenta.

It localises to the cell membrane. It is found in the sarcolemma. The protein localises to the cell junction. The protein resides in the cytoplasm. Its subcellular location is the cytoskeleton. In terms of biological role, adapter protein that binds to and probably organizes the subcellular localization of a variety of membrane proteins. May link various receptors to the actin cytoskeleton and the extracellular matrix via the dystrophin glycoprotein complex. Plays an important role in synapse formation and in the organization of UTRN and acetylcholine receptors at the neuromuscular synapse. Binds to phosphatidylinositol 4,5-bisphosphate. The chain is Alpha-1-syntrophin (SNTA1) from Homo sapiens (Human).